We begin with the raw amino-acid sequence, 66 residues long: Large ribosomal subunit protein uL29 (66 aa).

This sequence belongs to the universal ribosomal protein uL29 family.

The sequence is that of Large ribosomal subunit protein uL29 from Thermosipho africanus (strain TCF52B).